We begin with the raw amino-acid sequence, 142 residues long: Hemoglobin subunit alpha-2 (142 aa).

In terms of domain architecture, Globin spans Val2 to Arg142. His59 is a binding site for O2. His88 is a binding site for heme b.

This sequence belongs to the globin family. As to quaternary structure, heterotetramer of two alpha chains and two beta chains. Red blood cells.

Functionally, involved in oxygen transport from the lung to the various peripheral tissues. Hemopressin acts as an antagonist peptide of the cannabinoid receptor CNR1. Hemopressin-binding efficiently blocks cannabinoid receptor CNR1 and subsequent signaling. The sequence is that of Hemoglobin subunit alpha-2 (HBA2) from Equus quagga burchellii (Burchell's zebra).